The chain runs to 361 residues: Phosphoserine aminotransferase (361 aa).

Residue Arg42 coordinates L-glutamate. Pyridoxal 5'-phosphate contacts are provided by residues 76 to 77 (AT), Trp102, Thr152, Asp172, and Gln195. Lys196 bears the N6-(pyridoxal phosphate)lysine mark. Residue 237 to 238 (NT) coordinates pyridoxal 5'-phosphate.

Belongs to the class-V pyridoxal-phosphate-dependent aminotransferase family. SerC subfamily. As to quaternary structure, homodimer. Pyridoxal 5'-phosphate serves as cofactor.

The protein localises to the cytoplasm. The catalysed reaction is O-phospho-L-serine + 2-oxoglutarate = 3-phosphooxypyruvate + L-glutamate. It catalyses the reaction 4-(phosphooxy)-L-threonine + 2-oxoglutarate = (R)-3-hydroxy-2-oxo-4-phosphooxybutanoate + L-glutamate. It functions in the pathway amino-acid biosynthesis; L-serine biosynthesis; L-serine from 3-phospho-D-glycerate: step 2/3. Its pathway is cofactor biosynthesis; pyridoxine 5'-phosphate biosynthesis; pyridoxine 5'-phosphate from D-erythrose 4-phosphate: step 3/5. Functionally, catalyzes the reversible conversion of 3-phosphohydroxypyruvate to phosphoserine and of 3-hydroxy-2-oxo-4-phosphonooxybutanoate to phosphohydroxythreonine. In Stenotrophomonas maltophilia (strain K279a), this protein is Phosphoserine aminotransferase.